The chain runs to 572 residues: Bilirubin oxidase (572 aa).

The first 19 residues, 1 to 19, serve as a signal peptide directing secretion; sequence MFKHTLGAAALSLLFNSNA. Positions 20–38 are excised as a propeptide; the sequence is VQASPVPETSPATGHLFKR. Plastocyanin-like domains are found at residues 98–194 and 404–526; these read VGYD…YMLT and VAFA…VFVD. 12 residues coordinate Cu cation: His-132, His-134, His-172, His-174, His-436, His-439, His-441, His-494, Cys-495, His-496, His-500, and Met-505. 2 N-linked (GlcNAc...) asparagine glycosylation sites follow: Asn-510 and Asn-520.

This sequence belongs to the multicopper oxidase family. It depends on Cu cation as a cofactor.

It catalyses the reaction 2 (4Z,15Z)-bilirubin IXalpha + O2 = 2 biliverdin IXalpha + 2 H2O. In terms of biological role, oxidation of bilirubin and other tetrapyrroles. The sequence is that of Bilirubin oxidase from Albifimbria verrucaria (Myrothecium leaf spot and pod blight fungus).